We begin with the raw amino-acid sequence, 359 residues long: tRNA-specific 2-thiouridylase MnmA (359 aa).

Residues 6-13 (AMSGGVDS) and leucine 32 contribute to the ATP site. Residue cysteine 97 is the Nucleophile of the active site. Cysteine 97 and cysteine 195 are disulfide-bonded. Glycine 121 contacts ATP. An interaction with tRNA region spans residues 144–146 (KDQ). The active-site Cysteine persulfide intermediate is cysteine 195.

The protein belongs to the MnmA/TRMU family.

It localises to the cytoplasm. The enzyme catalyses S-sulfanyl-L-cysteinyl-[protein] + uridine(34) in tRNA + AH2 + ATP = 2-thiouridine(34) in tRNA + L-cysteinyl-[protein] + A + AMP + diphosphate + H(+). Catalyzes the 2-thiolation of uridine at the wobble position (U34) of tRNA, leading to the formation of s(2)U34. This chain is tRNA-specific 2-thiouridylase MnmA, found in Tropheryma whipplei (strain Twist) (Whipple's bacillus).